A 190-amino-acid polypeptide reads, in one-letter code: Potassium-transporting ATPase KdpC subunit (190 aa).

Residues 11–31 (LIVLMSLITGVAYPLVVTGVA) traverse the membrane as a helical segment.

The protein belongs to the KdpC family. As to quaternary structure, the system is composed of three essential subunits: KdpA, KdpB and KdpC.

It localises to the cell inner membrane. Part of the high-affinity ATP-driven potassium transport (or Kdp) system, which catalyzes the hydrolysis of ATP coupled with the electrogenic transport of potassium into the cytoplasm. This subunit acts as a catalytic chaperone that increases the ATP-binding affinity of the ATP-hydrolyzing subunit KdpB by the formation of a transient KdpB/KdpC/ATP ternary complex. The chain is Potassium-transporting ATPase KdpC subunit from Pseudomonas savastanoi pv. phaseolicola (strain 1448A / Race 6) (Pseudomonas syringae pv. phaseolicola (strain 1448A / Race 6)).